Here is a 92-residue protein sequence, read N- to C-terminus: DNA-binding protein HU-alpha (92 aa).

The protein belongs to the bacterial histone-like protein family. As to quaternary structure, heterodimer of an alpha and a beta chain.

In terms of biological role, histone-like DNA-binding protein which is capable of wrapping DNA to stabilize it, and thus to prevent its denaturation under extreme environmental conditions. The chain is DNA-binding protein HU-alpha (hupA) from Burkholderia pseudomallei (strain K96243).